A 236-amino-acid polypeptide reads, in one-letter code: Probable 2-phosphosulfolactate phosphatase (236 aa).

This sequence belongs to the ComB family. It depends on Mg(2+) as a cofactor.

The catalysed reaction is (2R)-O-phospho-3-sulfolactate + H2O = (2R)-3-sulfolactate + phosphate. The protein is Probable 2-phosphosulfolactate phosphatase of Gloeobacter violaceus (strain ATCC 29082 / PCC 7421).